The chain runs to 478 residues: Alpha,alpha-trehalose-phosphate synthase [UDP-forming] (478 aa).

D-glucose 6-phosphate-binding residues include Tyr-89 and Asp-143. UDP-binding residues include Arg-280 and Lys-285. The UDP-alpha-D-glucose site is built by Arg-280 and Lys-285. Residue Arg-318 participates in D-glucose 6-phosphate binding. Residues Ile-357 and Leu-383–Glu-387 contribute to the UDP site. UDP-alpha-D-glucose-binding positions include Ile-357 and Asp-379–Glu-387.

This sequence belongs to the glycosyltransferase 20 family.

The enzyme catalyses D-glucose 6-phosphate + UDP-alpha-D-glucose = alpha,alpha-trehalose 6-phosphate + UDP + H(+). Its pathway is carbohydrate biosynthesis. Inhibited by validoxylamine A, a non-reactive trehalose analog. Synthase catalytic subunit of the trehalose synthase complex that catalyzes the production of trehalose from glucose-6-phosphate and UDP-alpha-D-glucose in a two step process. This chain is Alpha,alpha-trehalose-phosphate synthase [UDP-forming], found in Candida albicans (strain SC5314 / ATCC MYA-2876) (Yeast).